A 180-amino-acid chain; its full sequence is Centromere protein M (180 aa).

In terms of assembly, component of the CENPA-NAC complex, at least composed of CENPA, CENPC, CENPH, CENPM, CENPN, CENPT and CENPU. The CENPA-NAC complex interacts with the CENPA-CAD complex, composed of CENPI, CENPK, CENPL, CENPO, CENPP, CENPQ, CENPR and CENPS. In terms of tissue distribution, isoform 3 is highly expressed in spleen, and intermediately in heart, prostate and ovary. Isoform 3 is highly expressed in resting CD19 B-cells and B-lineage chronic lymphocytic leukemia (B-CLL) cells and weakly expressed in activated B-cells. Isoform 1 is selectively expressed in activated CD19 cells and weakly in resting CD19 B-cells.

The protein resides in the nucleus. It localises to the cytoplasm. The protein localises to the chromosome. Its subcellular location is the centromere. It is found in the kinetochore. Component of the CENPA-NAC (nucleosome-associated) complex, a complex that plays a central role in assembly of kinetochore proteins, mitotic progression and chromosome segregation. The CENPA-NAC complex recruits the CENPA-CAD (nucleosome distal) complex and may be involved in incorporation of newly synthesized CENPA into centromeres. The polypeptide is Centromere protein M (CENPM) (Homo sapiens (Human)).